A 252-amino-acid polypeptide reads, in one-letter code: 5'-nucleotidase SurE (252 aa).

A divalent metal cation is bound by residues D8, D9, S39, and N91.

It belongs to the SurE nucleotidase family. Requires a divalent metal cation as cofactor.

The protein resides in the cytoplasm. It catalyses the reaction a ribonucleoside 5'-phosphate + H2O = a ribonucleoside + phosphate. Functionally, nucleotidase that shows phosphatase activity on nucleoside 5'-monophosphates. The polypeptide is 5'-nucleotidase SurE (Variovorax paradoxus (strain S110)).